Here is a 178-residue protein sequence, read N- to C-terminus: Inorganic pyrophosphatase (178 aa).

K29, R43, and Y55 together coordinate substrate. Positions 65, 70, and 102 each coordinate Mg(2+). Residue Y141 coordinates substrate.

This sequence belongs to the PPase family. As to quaternary structure, homohexamer. Mg(2+) is required as a cofactor.

The protein resides in the cytoplasm. It carries out the reaction diphosphate + H2O = 2 phosphate + H(+). Its function is as follows. Catalyzes the hydrolysis of inorganic pyrophosphate (PPi) forming two phosphate ions. This chain is Inorganic pyrophosphatase, found in Rickettsia typhi (strain ATCC VR-144 / Wilmington).